The sequence spans 124 residues: UPF0538 protein (124 aa).

This sequence belongs to the UPF0538 family.

This is UPF0538 protein from Dictyostelium discoideum (Social amoeba).